Here is a 297-residue protein sequence, read N- to C-terminus: Cell death peptidase (297 aa).

The next 2 membrane-spanning stretches (helical) occupy residues 61–82 (IVLTVASLEYIWAFSNFFWVFT) and 149–178 (IFLCAIAWILHHEISHVVLQHPLVTTAFST).

It belongs to the peptidase U49 family.

The protein localises to the cell membrane. Its function is as follows. Interacts with a short DNA sequence about one-quarter of the way into the major capsid protein gene 23 of T4; general translation inhibition occurs when this late gene of the virus is expressed. In Escherichia coli (strain K12), this protein is Cell death peptidase (lit).